The following is a 213-amino-acid chain: MQFSSAVVLSAVAGSALAAYSNSTVTDIQTTVVTITSCEENKCHETEVTTGVTTVTEVDTTYTTYCPLSTTEAPAPSTATDVSTTVVTITSCEEDKCHETAVTTGVTTVTEGTTIYTTYCPLPSTEAPGPAPSTAEESKPAESSPVPTTAAESSPAKTTAAESSPAQETTPKTVAAESSSAETTAPAVSTAEAGAAANAVPVAAGLLALAALF.

The N-terminal stretch at 1–18 is a signal peptide; it reads MQFSSAVVLSAVAGSALA. N22 is a glycosylation site (N-linked (GlcNAc...) asparagine). The interval 120–194 is disordered; it reads CPLPSTEAPG…APAVSTAEAG (75 aa). Positions 145 to 172 are enriched in polar residues; sequence PVPTTAAESSPAKTTAAESSPAQETTPK. Positions 173–194 are enriched in low complexity; it reads TVAAESSSAETTAPAVSTAEAG. A lipid anchor (GPI-anchor amidated glycine) is attached at G194. Residues 195–213 constitute a propeptide, removed in mature form; sequence AAANAVPVAAGLLALAALF.

This sequence belongs to the HWP1 family. In terms of processing, N- and O-glycosylated. Post-translationally, the GPI-anchor is attached to the protein in the endoplasmic reticulum and serves to target the protein to the cell surface. There, the glucosamine-inositol phospholipid moiety is cleaved off and the GPI-modified mannoprotein is covalently attached via its lipidless GPI glycan remnant to the 1,6-beta-glucan of the outer cell wall layer.

It is found in the secreted. The protein resides in the cell wall. Its subcellular location is the membrane. In terms of biological role, cell wall protein necessary for cell wall integrity. Plays only a minor role in hyphal morphogenesis and is not critical to biofilm formation. The sequence is that of Cell wall protein PGA62 (PGA62) from Candida albicans (strain SC5314 / ATCC MYA-2876) (Yeast).